A 942-amino-acid chain; its full sequence is Sucrose synthase 6 (942 aa).

Positions Thr281–Thr759 are GT-B glycosyltransferase. The tract at residues Thr830–Lys862 is disordered. The span at Lys838–Lys862 shows a compositional bias: basic and acidic residues.

This sequence belongs to the glycosyltransferase 1 family. Plant sucrose synthase subfamily. Detected in the whole plant but more precisely confined to the vasculature in cotyledons, leaves, petals, anthers and roots.

The protein resides in the secreted. It localises to the cell wall. It carries out the reaction an NDP-alpha-D-glucose + D-fructose = a ribonucleoside 5'-diphosphate + sucrose + H(+). Functionally, sucrose-cleaving enzyme that provides UDP-glucose and fructose for various metabolic pathways. Functions in callose synthesis at the site of phloem sieve elements. The polypeptide is Sucrose synthase 6 (SUS6) (Arabidopsis thaliana (Mouse-ear cress)).